The chain runs to 168 residues: G/U mismatch-specific DNA glycosylase (168 aa).

It belongs to the uracil-DNA glycosylase (UDG) superfamily. TDG/mug family. As to quaternary structure, binds DNA as a monomer.

The protein localises to the cytoplasm. It carries out the reaction Specifically hydrolyzes mismatched double-stranded DNA and polynucleotides, releasing free uracil.. In terms of biological role, excises ethenocytosine and uracil, which can arise by alkylation or deamination of cytosine, respectively, from the corresponding mispairs with guanine in ds-DNA. It is capable of hydrolyzing the carbon-nitrogen bond between the sugar-phosphate backbone of the DNA and the mispaired base. The complementary strand guanine functions in substrate recognition. Required for DNA damage lesion repair in stationary-phase cells. The polypeptide is G/U mismatch-specific DNA glycosylase (Escherichia coli (strain UTI89 / UPEC)).